Reading from the N-terminus, the 101-residue chain is NAD(P)H-quinone oxidoreductase subunit 4L, chloroplastic (101 aa).

3 helical membrane passes run 2-22 (MLEH…YGLI), 32-52 (MCLE…SDFF), and 61-81 (IFSI…PAIV).

The protein belongs to the complex I subunit 4L family. As to quaternary structure, NDH is composed of at least 16 different subunits, 5 of which are encoded in the nucleus.

The protein resides in the plastid. The protein localises to the chloroplast thylakoid membrane. It catalyses the reaction a plastoquinone + NADH + (n+1) H(+)(in) = a plastoquinol + NAD(+) + n H(+)(out). The catalysed reaction is a plastoquinone + NADPH + (n+1) H(+)(in) = a plastoquinol + NADP(+) + n H(+)(out). In terms of biological role, NDH shuttles electrons from NAD(P)H:plastoquinone, via FMN and iron-sulfur (Fe-S) centers, to quinones in the photosynthetic chain and possibly in a chloroplast respiratory chain. The immediate electron acceptor for the enzyme in this species is believed to be plastoquinone. Couples the redox reaction to proton translocation, and thus conserves the redox energy in a proton gradient. The sequence is that of NAD(P)H-quinone oxidoreductase subunit 4L, chloroplastic from Morus indica (Mulberry).